Consider the following 367-residue polypeptide: Histidinol-phosphate aminotransferase (367 aa).

Position 225 is an N6-(pyridoxal phosphate)lysine (Lys-225).

The protein belongs to the class-II pyridoxal-phosphate-dependent aminotransferase family. Histidinol-phosphate aminotransferase subfamily. In terms of assembly, homodimer. Pyridoxal 5'-phosphate is required as a cofactor.

It catalyses the reaction L-histidinol phosphate + 2-oxoglutarate = 3-(imidazol-4-yl)-2-oxopropyl phosphate + L-glutamate. Its pathway is amino-acid biosynthesis; L-histidine biosynthesis; L-histidine from 5-phospho-alpha-D-ribose 1-diphosphate: step 7/9. The protein is Histidinol-phosphate aminotransferase of Hyphomonas neptunium (strain ATCC 15444).